Reading from the N-terminus, the 406-residue chain is Lysophospholipid transporter LplT (406 aa).

11 helical membrane-spanning segments follow: residues 16–36 (MVAV…LLFA), 53–73 (ILQM…GQIA), 91–111 (AGAL…LVGV), 139–159 (MMEA…GILA), 164–184 (MAAL…NLFI), 227–247 (LFWG…PVAL), 253–273 (ATPT…AGAA), 285–305 (CLPA…QNSM), 310–330 (LLLI…NALL), 349–369 (LGEN…VKLG), and 372–392 (VVAV…LLWG).

The protein belongs to the major facilitator superfamily. LplT (TC 2.A.1.42) family.

It localises to the cell inner membrane. Catalyzes the facilitated diffusion of 2-acyl-glycero-3-phosphoethanolamine (2-acyl-GPE) into the cell. The sequence is that of Lysophospholipid transporter LplT from Yersinia pestis bv. Antiqua (strain Antiqua).